The sequence spans 123 residues: Small ribosomal subunit protein uS12 (123 aa).

The interval 1 to 31 is disordered; it reads MPTINQLIRKPREAQKARDKAPALQASPQKR. Residues 10–21 are compositionally biased toward basic and acidic residues; that stretch reads KPREAQKARDKA. Position 89 is a 3-methylthioaspartic acid (Asp89).

Belongs to the universal ribosomal protein uS12 family. As to quaternary structure, part of the 30S ribosomal subunit. Contacts proteins S8 and S17. May interact with IF1 in the 30S initiation complex.

Functionally, with S4 and S5 plays an important role in translational accuracy. Interacts with and stabilizes bases of the 16S rRNA that are involved in tRNA selection in the A site and with the mRNA backbone. Located at the interface of the 30S and 50S subunits, it traverses the body of the 30S subunit contacting proteins on the other side and probably holding the rRNA structure together. The combined cluster of proteins S8, S12 and S17 appears to hold together the shoulder and platform of the 30S subunit. The chain is Small ribosomal subunit protein uS12 from Xanthobacter autotrophicus (strain ATCC BAA-1158 / Py2).